The chain runs to 110 residues: Probable ribonuclease HepT (110 aa).

Catalysis depends on residues R75 and H80. Positions 75 to 82 (RDKLIHAY) match the RX(4)HXY motif motif. O-di-AMP-tyrosine is present on Y82.

The protein belongs to the HepT RNase toxin family. Post-translationally, modified by cognate antitoxin MntA; probably at least 2 successive AMPylation events occur on Tyr-82.

Functionally, toxic component of a type VII toxin-antitoxin (TA) system. Overexpression in E.coli inhibits cell growth. Neutralized by cognate antitoxin MntA. Neutralization is probably due to AMPylation by MntA. Probably an RNAase. The protein is Probable ribonuclease HepT of Thermococcus cleftensis (strain DSM 27260 / KACC 17922 / CL1).